Consider the following 88-residue polypeptide: Small ribosomal subunit protein uS15c (88 aa).

This sequence belongs to the universal ribosomal protein uS15 family. In terms of assembly, part of the 30S ribosomal subunit.

Its subcellular location is the plastid. The protein resides in the chloroplast. The polypeptide is Small ribosomal subunit protein uS15c (rps15) (Nasturtium officinale (Watercress)).